The sequence spans 196 residues: SPRY domain-containing protein 7 (196 aa).

A2 is modified (N-acetylalanine). Residues 2 to 184 (AASAWCCLRC…FSEFYHTPPP (183 aa)) enclose the B30.2/SPRY domain.

This chain is SPRY domain-containing protein 7 (Spryd7), found in Mus musculus (Mouse).